Consider the following 680-residue polypeptide: Galactose oxidase (680 aa).

A signal peptide spans 1–24 (MKHFLSLALCFSSINAVAVTVPHK). Positions 25–41 (SGGTGSPEGSLQFLSLR) are excised as a propeptide. The 148-residue stretch at 42–189 (ASAPIGSAIS…SIAEINVFQA (148 aa)) folds into the F5/8 type C domain. Cys-59 and Cys-68 are oxidised to a cystine. Kelch repeat units lie at residues 223 to 268 (RVLM…HDMF), 279 to 321 (QIVV…TMSD), 323 to 372 (RVFT…LYRS), 436 to 490 (KILT…VLPD), and 492 to 544 (STFI…LLLP). Positions 269-313 (CPGISMDGNGQIVVTGGNDAKKTSLYDSSSDSWIPGPDMQVARGY) form a cross-link, 3'-(S-cysteinyl)-tyrosine (Cys-Tyr). Tyr-313 is a Cu cation binding site. Residues Tyr-536 and His-537 each contribute to the Cu cation site. Residue Tyr-536 is the Proton acceptor of the active site. Cys-556 and Cys-559 are oxidised to a cystine. A Cu cation-binding site is contributed by His-622.

Monomer. Cu(2+) is required as a cofactor. Galactose oxidase contains a protein-derived free radical cofactor. In the active state, Tyr-313, which is cross-linked to Cys-269 via a thioether bond, is oxidized to a radical and acts with Cu(2+) as a two-electron acceptor in the oxidation reaction. The cross-link is believed to modulate the redox potential of the tyrosyl radical, which is further stabilized by a stacking interaction with Trp-331 in the active site. The post-translational formation of the cross-link is closely linked to the propeptide cleavage event, and both are copper-dependent, autocatalytic processes. The propeptide may act as an intramolecular chaperone, facilitating thioester bond formation and copper binding by positioning of active-site residues, including copper ligands.

The protein localises to the secreted. The catalysed reaction is D-galactose + O2 = D-galacto-hexodialdose + H2O2. Functionally, catalyzes the sterospecific oxidation of primary alcohols to the corresponding aldehydes. The biologically relevant substrate of the enzyme is not known as the enzyme exhibits broad substrate specificity from small alcohols through sugars to oligo- and polysaccharides. The protein is Galactose oxidase (GAOA) of Gibberella zeae (strain ATCC MYA-4620 / CBS 123657 / FGSC 9075 / NRRL 31084 / PH-1) (Wheat head blight fungus).